A 299-amino-acid chain; its full sequence is Probable alpha-L-glutamate ligase (299 aa).

Positions 104-287 (LQLLAREGIE…VSGKIIEFLE (184 aa)) constitute an ATP-grasp domain. ATP contacts are provided by residues lysine 141, 178-179 (EF), aspartate 187, and 211-213 (RSN). Residues aspartate 248, glutamate 260, and asparagine 262 each contribute to the Mg(2+) site. Residues aspartate 248, glutamate 260, and asparagine 262 each contribute to the Mn(2+) site.

Belongs to the RimK family. It depends on Mg(2+) as a cofactor. Requires Mn(2+) as cofactor.

This is Probable alpha-L-glutamate ligase from Trichodesmium erythraeum (strain IMS101).